Consider the following 554-residue polypeptide: Trimethyltridecatetraene synthase (554 aa).

A helical transmembrane segment spans residues M1–S21. Residue C464 coordinates heme.

This sequence belongs to the cytochrome P450 family. Requires heme as cofactor.

It is found in the membrane. It carries out the reaction (6E,10E)-geranyllinalool + reduced [NADPH--hemoprotein reductase] + O2 = (3E,7E)-4,8,12-trimethyltrideca 1,3,7,11-tetraene + but-3-en-2-one + oxidized [NADPH--hemoprotein reductase] + 2 H2O + H(+). It participates in secondary metabolite biosynthesis; terpenoid biosynthesis. In terms of biological role, component of the volatile terpenes biosynthesis pathways. Converts mainly geranyllinalool to trimethyltridecatetraene (TMTT). This Zea mays (Maize) protein is Trimethyltridecatetraene synthase.